The sequence spans 475 residues: Aspartyl/glutamyl-tRNA(Asn/Gln) amidotransferase subunit B (475 aa).

The protein belongs to the GatB/GatE family. GatB subfamily. Heterotrimer of A, B and C subunits.

It catalyses the reaction L-glutamyl-tRNA(Gln) + L-glutamine + ATP + H2O = L-glutaminyl-tRNA(Gln) + L-glutamate + ADP + phosphate + H(+). The enzyme catalyses L-aspartyl-tRNA(Asn) + L-glutamine + ATP + H2O = L-asparaginyl-tRNA(Asn) + L-glutamate + ADP + phosphate + 2 H(+). In terms of biological role, allows the formation of correctly charged Asn-tRNA(Asn) or Gln-tRNA(Gln) through the transamidation of misacylated Asp-tRNA(Asn) or Glu-tRNA(Gln) in organisms which lack either or both of asparaginyl-tRNA or glutaminyl-tRNA synthetases. The reaction takes place in the presence of glutamine and ATP through an activated phospho-Asp-tRNA(Asn) or phospho-Glu-tRNA(Gln). The protein is Aspartyl/glutamyl-tRNA(Asn/Gln) amidotransferase subunit B of Chlorobium limicola (strain DSM 245 / NBRC 103803 / 6330).